A 317-amino-acid chain; its full sequence is Probable cell division protein WhiA (317 aa).

Residues 275–308 constitute a DNA-binding region (H-T-H motif); it reads SLKELGEMLVPKVGKSGVNHRMRKIDELAEKLEE.

This sequence belongs to the WhiA family.

Its function is as follows. Involved in cell division and chromosome segregation. In Desulfitobacterium hafniense (strain DSM 10664 / DCB-2), this protein is Probable cell division protein WhiA.